The sequence spans 70 residues: Exodeoxyribonuclease 7 small subunit (70 aa).

Belongs to the XseB family. Heterooligomer composed of large and small subunits.

It is found in the cytoplasm. It catalyses the reaction Exonucleolytic cleavage in either 5'- to 3'- or 3'- to 5'-direction to yield nucleoside 5'-phosphates.. Functionally, bidirectionally degrades single-stranded DNA into large acid-insoluble oligonucleotides, which are then degraded further into small acid-soluble oligonucleotides. This Streptococcus pneumoniae serotype 2 (strain D39 / NCTC 7466) protein is Exodeoxyribonuclease 7 small subunit.